A 231-amino-acid polypeptide reads, in one-letter code: 5'-methylthioadenosine/S-adenosylhomocysteine nucleosidase (231 aa).

Glu-12 functions as the Proton acceptor in the catalytic mechanism. Residues Gly-78, Ile-153, and 174–175 (ME) each bind substrate. The Proton donor role is filled by Asp-198.

Belongs to the PNP/UDP phosphorylase family. MtnN subfamily.

It carries out the reaction S-adenosyl-L-homocysteine + H2O = S-(5-deoxy-D-ribos-5-yl)-L-homocysteine + adenine. The enzyme catalyses S-methyl-5'-thioadenosine + H2O = 5-(methylsulfanyl)-D-ribose + adenine. The catalysed reaction is 5'-deoxyadenosine + H2O = 5-deoxy-D-ribose + adenine. It participates in amino-acid biosynthesis; L-methionine biosynthesis via salvage pathway; S-methyl-5-thio-alpha-D-ribose 1-phosphate from S-methyl-5'-thioadenosine (hydrolase route): step 1/2. Its function is as follows. Catalyzes the irreversible cleavage of the glycosidic bond in both 5'-methylthioadenosine (MTA) and S-adenosylhomocysteine (SAH/AdoHcy) to adenine and the corresponding thioribose, 5'-methylthioribose and S-ribosylhomocysteine, respectively. Also cleaves 5'-deoxyadenosine, a toxic by-product of radical S-adenosylmethionine (SAM) enzymes, into 5-deoxyribose and adenine. The polypeptide is 5'-methylthioadenosine/S-adenosylhomocysteine nucleosidase (Shewanella sp. (strain W3-18-1)).